Reading from the N-terminus, the 332-residue chain is Ketol-acid reductoisomerase (NADP(+)) (332 aa).

A KARI N-terminal Rossmann domain is found at 5–185 (VKVYYDDEVS…GCTRAGVIET (181 aa)). Residues 28 to 31 (YGNQ), Arg-51, Ser-56, and 86 to 89 (DLVQ) contribute to the NADP(+) site. The active site involves His-111. Gly-137 contributes to the NADP(+) binding site. The KARI C-terminal knotted domain occupies 186–331 (TFKDETESDL…RFIRKMSGLE (146 aa)). Mg(2+) contacts are provided by Asp-194, Glu-198, Glu-230, and Glu-234. Ser-255 is a substrate binding site.

It belongs to the ketol-acid reductoisomerase family. It depends on Mg(2+) as a cofactor.

The catalysed reaction is (2R)-2,3-dihydroxy-3-methylbutanoate + NADP(+) = (2S)-2-acetolactate + NADPH + H(+). It catalyses the reaction (2R,3R)-2,3-dihydroxy-3-methylpentanoate + NADP(+) = (S)-2-ethyl-2-hydroxy-3-oxobutanoate + NADPH + H(+). It functions in the pathway amino-acid biosynthesis; L-isoleucine biosynthesis; L-isoleucine from 2-oxobutanoate: step 2/4. The protein operates within amino-acid biosynthesis; L-valine biosynthesis; L-valine from pyruvate: step 2/4. Involved in the biosynthesis of branched-chain amino acids (BCAA). Catalyzes an alkyl-migration followed by a ketol-acid reduction of (S)-2-acetolactate (S2AL) to yield (R)-2,3-dihydroxy-isovalerate. In the isomerase reaction, S2AL is rearranged via a Mg-dependent methyl migration to produce 3-hydroxy-3-methyl-2-ketobutyrate (HMKB). In the reductase reaction, this 2-ketoacid undergoes a metal-dependent reduction by NADPH to yield (R)-2,3-dihydroxy-isovalerate. In Pyrococcus abyssi (strain GE5 / Orsay), this protein is Ketol-acid reductoisomerase (NADP(+)).